A 114-amino-acid chain; its full sequence is Iron-sulfur cluster insertion protein ErpA (114 aa).

Cys42, Cys106, and Cys108 together coordinate iron-sulfur cluster.

The protein belongs to the HesB/IscA family. Homodimer. Iron-sulfur cluster serves as cofactor.

In terms of biological role, required for insertion of 4Fe-4S clusters for at least IspG. This Erwinia tasmaniensis (strain DSM 17950 / CFBP 7177 / CIP 109463 / NCPPB 4357 / Et1/99) protein is Iron-sulfur cluster insertion protein ErpA.